A 2083-amino-acid chain; its full sequence is Centriole proteome protein 16 (2083 aa).

A disordered region spans residues D205–S333. Low complexity predominate over residues T227–A245. Residues S246–K258 show a composition bias toward gly residues. Composition is skewed to low complexity over residues A259–A274 and G283–G292. Positions G302–D315 are enriched in acidic residues. Pro residues predominate over residues P319 to S331. 10 WD repeats span residues G482–I523, A526–G569, A579–V620, L689–E726, E728–L767, S770–E809, A812–E853, Q856–Q895, V990–G1029, and G1041–E1079. Disordered regions lie at residues H1113 to A1141 and A1225 to P1276. A compositionally biased stretch (pro residues) spans V1263–P1276. WD repeat units lie at residues G1326–Q1365, Y1403–A1444, E1448–R1486, R1497–Q1539, G1651–A1691, D1736–W1781, and R1785–Y1824. The tract at residues A1713 to A1743 is disordered. The segment covering H1720 to A1743 has biased composition (low complexity). Residues G1832–S1870 form a disordered region. Residues S1851–G1860 show a composition bias toward pro residues. The WD 18 repeat unit spans residues G2035–T2073.

Belongs to the WD repeat WDR90/POC16 family.

Its subcellular location is the cytoplasm. It is found in the cytoskeleton. The protein localises to the microtubule organizing center. It localises to the centrosome. The protein resides in the centriole. In terms of biological role, required for flagellum assembly and/or maintenance. The chain is Centriole proteome protein 16 from Chlamydomonas reinhardtii (Chlamydomonas smithii).